A 294-amino-acid chain; its full sequence is MSWIDKIFSKKPSSDSRRANVPEGVWTKCTACEQVLYRDELKRHLEVCPKCGHHMRIDARERLEYLLDKDSMTEIAADLEPKDILKFKDLKKYKDRLSAAQKDTGEKDALVAMSGTLYGMPIVAAASNFAFMGGSMGSVVGAKFVQAAEEAIEKNCPFVCFSASGGARMQEALLSLMQMAKTSAVLAKMKEKGVPFISVLTDPTLGGVSASFAMLGDLNIAEPKALIGFAGPRVIEQTVREKLPEGFQRAEFLLEHGAIDMIIQRSEMREKLASILSKLMNKPSPFLEPEIIAD.

The region spanning 25 to 294 (VWTKCTACEQ…PFLEPEIIAD (270 aa)) is the CoA carboxyltransferase N-terminal domain. Zn(2+) contacts are provided by C29, C32, C48, and C51. A C4-type zinc finger spans residues 29–51 (CTACEQVLYRDELKRHLEVCPKC).

It belongs to the AccD/PCCB family. In terms of assembly, acetyl-CoA carboxylase is a heterohexamer composed of biotin carboxyl carrier protein (AccB), biotin carboxylase (AccC) and two subunits each of ACCase subunit alpha (AccA) and ACCase subunit beta (AccD). Requires Zn(2+) as cofactor.

The protein localises to the cytoplasm. The enzyme catalyses N(6)-carboxybiotinyl-L-lysyl-[protein] + acetyl-CoA = N(6)-biotinyl-L-lysyl-[protein] + malonyl-CoA. It participates in lipid metabolism; malonyl-CoA biosynthesis; malonyl-CoA from acetyl-CoA: step 1/1. Its function is as follows. Component of the acetyl coenzyme A carboxylase (ACC) complex. Biotin carboxylase (BC) catalyzes the carboxylation of biotin on its carrier protein (BCCP) and then the CO(2) group is transferred by the transcarboxylase to acetyl-CoA to form malonyl-CoA. The chain is Acetyl-coenzyme A carboxylase carboxyl transferase subunit beta from Actinobacillus succinogenes (strain ATCC 55618 / DSM 22257 / CCUG 43843 / 130Z).